Here is a 404-residue protein sequence, read N- to C-terminus: Probable tRNA sulfurtransferase (404 aa).

Residues 60–165 (EPVAEALKNV…DEAAYISHEE (106 aa)) form the THUMP domain. ATP-binding positions include 183–184 (ML), 208–209 (HF), Arg265, Gly287, and Gln296.

It belongs to the ThiI family.

It is found in the cytoplasm. The catalysed reaction is [ThiI sulfur-carrier protein]-S-sulfanyl-L-cysteine + a uridine in tRNA + 2 reduced [2Fe-2S]-[ferredoxin] + ATP + H(+) = [ThiI sulfur-carrier protein]-L-cysteine + a 4-thiouridine in tRNA + 2 oxidized [2Fe-2S]-[ferredoxin] + AMP + diphosphate. It carries out the reaction [ThiS sulfur-carrier protein]-C-terminal Gly-Gly-AMP + S-sulfanyl-L-cysteinyl-[cysteine desulfurase] + AH2 = [ThiS sulfur-carrier protein]-C-terminal-Gly-aminoethanethioate + L-cysteinyl-[cysteine desulfurase] + A + AMP + 2 H(+). The protein operates within cofactor biosynthesis; thiamine diphosphate biosynthesis. Functionally, catalyzes the ATP-dependent transfer of a sulfur to tRNA to produce 4-thiouridine in position 8 of tRNAs, which functions as a near-UV photosensor. Also catalyzes the transfer of sulfur to the sulfur carrier protein ThiS, forming ThiS-thiocarboxylate. This is a step in the synthesis of thiazole, in the thiamine biosynthesis pathway. The sulfur is donated as persulfide by IscS. This chain is Probable tRNA sulfurtransferase, found in Streptococcus uberis (strain ATCC BAA-854 / 0140J).